The chain runs to 1094 residues: Isoleucine--tRNA ligase (1094 aa).

The 'HIGH' region motif lies at 53-63 (PFANGLPHYGH). The short motif at 624-628 (KLSKR) is the 'KMSKS' region element. K627 lines the ATP pocket.

The protein belongs to the class-I aminoacyl-tRNA synthetase family. IleS type 2 subfamily. Monomer. The cofactor is Zn(2+).

The protein resides in the cytoplasm. It catalyses the reaction tRNA(Ile) + L-isoleucine + ATP = L-isoleucyl-tRNA(Ile) + AMP + diphosphate. In terms of biological role, catalyzes the attachment of isoleucine to tRNA(Ile). As IleRS can inadvertently accommodate and process structurally similar amino acids such as valine, to avoid such errors it has two additional distinct tRNA(Ile)-dependent editing activities. One activity is designated as 'pretransfer' editing and involves the hydrolysis of activated Val-AMP. The other activity is designated 'posttransfer' editing and involves deacylation of mischarged Val-tRNA(Ile). In Rickettsia felis (strain ATCC VR-1525 / URRWXCal2) (Rickettsia azadi), this protein is Isoleucine--tRNA ligase.